The following is a 313-amino-acid chain: tRNA (guanine-N(7)-)-methyltransferase (313 aa).

Positions 33, 58, and 85 each coordinate S-adenosyl-L-methionine. Residues K112, D144, and 177 to 180 contribute to the substrate site; that span reads TRYE.

This sequence belongs to the class I-like SAM-binding methyltransferase superfamily. TrmB family.

It catalyses the reaction guanosine(46) in tRNA + S-adenosyl-L-methionine = N(7)-methylguanosine(46) in tRNA + S-adenosyl-L-homocysteine. It functions in the pathway tRNA modification; N(7)-methylguanine-tRNA biosynthesis. In terms of biological role, catalyzes the formation of N(7)-methylguanine at position 46 (m7G46) in tRNA. This Thermotoga maritima (strain ATCC 43589 / DSM 3109 / JCM 10099 / NBRC 100826 / MSB8) protein is tRNA (guanine-N(7)-)-methyltransferase.